A 233-amino-acid chain; its full sequence is TATA-box-binding protein 1 (233 aa).

2 tandem repeats follow at residues Leu58 to Val134 and Ile148 to Leu225.

The protein belongs to the TBP family. In terms of assembly, belongs to the TFIID complex together with the TBP-associated factors (TAFs). Binds DNA as monomer.

The protein resides in the nucleus. In terms of biological role, general transcription factor that functions at the core of the DNA-binding multiprotein factor TFIID. Binding of TFIID to the TATA box is the initial transcriptional step of the pre-initiation complex (PIC), playing a role in the activation of eukaryotic genes transcribed by RNA polymerase II. The chain is TATA-box-binding protein 1 (TBP1) from Triticum aestivum (Wheat).